The following is a 74-amino-acid chain: MKLTCVLIIAVLFLTAYQLATAASYAKGKQKHRALRPADKHLRLTKRCNDRGGGCSQHPHCCGGTCNKLIGVCL.

A signal peptide spans Met1–Ala22. Positions Ala23–Thr45 are excised as a propeptide. 3 cysteine pairs are disulfide-bonded: Cys48-Cys62, Cys55-Cys66, and Cys61-Cys73.

It belongs to the conotoxin O1 superfamily. As to expression, expressed by the venom duct.

It localises to the secreted. This chain is Conotoxin MiEr93, found in Conus miles (Soldier cone).